We begin with the raw amino-acid sequence, 308 residues long: Methionyl-tRNA formyltransferase (308 aa).

110-113 (SLLP) lines the (6S)-5,6,7,8-tetrahydrofolate pocket.

This sequence belongs to the Fmt family.

The catalysed reaction is L-methionyl-tRNA(fMet) + (6R)-10-formyltetrahydrofolate = N-formyl-L-methionyl-tRNA(fMet) + (6S)-5,6,7,8-tetrahydrofolate + H(+). Functionally, attaches a formyl group to the free amino group of methionyl-tRNA(fMet). The formyl group appears to play a dual role in the initiator identity of N-formylmethionyl-tRNA by promoting its recognition by IF2 and preventing the misappropriation of this tRNA by the elongation apparatus. This Neisseria gonorrhoeae (strain NCCP11945) protein is Methionyl-tRNA formyltransferase.